The sequence spans 255 residues: MLTVIPIPAFQDNYIWLLRQDASDKVVIVDPGDAQPVIEYLEREGLSLAAILVTHHHHDHTGGIDALVKRYSPRVIGPDNSAIPAIDEVVGDEDECRVQGRRFEVFAVPGHTLDHIAFYAPGTPGLLFCGDTLFSGGCGRLFEGTAEQMHRSLARLAALPDDTLVFAGHEYTLANLRFAQAAEPDNPARDAHLGECERARQLERPTLPSTIGRERQINPFLRIDQPGLLNALAEQGSVDDDSAAFATLRGWKDRF.

Residues histidine 55, histidine 57, aspartate 59, histidine 60, histidine 111, aspartate 131, and histidine 169 each coordinate Zn(2+).

The protein belongs to the metallo-beta-lactamase superfamily. Glyoxalase II family. As to quaternary structure, monomer. Requires Zn(2+) as cofactor.

The enzyme catalyses an S-(2-hydroxyacyl)glutathione + H2O = a 2-hydroxy carboxylate + glutathione + H(+). Its pathway is secondary metabolite metabolism; methylglyoxal degradation; (R)-lactate from methylglyoxal: step 2/2. Functionally, thiolesterase that catalyzes the hydrolysis of S-D-lactoyl-glutathione to form glutathione and D-lactic acid. The chain is Hydroxyacylglutathione hydrolase from Chromohalobacter salexigens (strain ATCC BAA-138 / DSM 3043 / CIP 106854 / NCIMB 13768 / 1H11).